The primary structure comprises 277 residues: Polyamine aminopropyltransferase (277 aa).

A PABS domain is found at 2–235 (ELWFTENQDE…SLWTFTMGSK (234 aa)). Residue Q31 participates in S-methyl-5'-thioadenosine binding. Spermidine is bound by residues H62 and D86. Residues E106 and 137–138 (DG) each bind S-methyl-5'-thioadenosine. D155 functions as the Proton acceptor in the catalytic mechanism. 155-158 (DSTD) serves as a coordination point for spermidine. S-methyl-5'-thioadenosine is bound at residue P162.

The protein belongs to the spermidine/spermine synthase family. As to quaternary structure, homodimer or homotetramer.

The protein localises to the cytoplasm. It catalyses the reaction S-adenosyl 3-(methylsulfanyl)propylamine + putrescine = S-methyl-5'-thioadenosine + spermidine + H(+). Its pathway is amine and polyamine biosynthesis; spermidine biosynthesis; spermidine from putrescine: step 1/1. Functionally, catalyzes the irreversible transfer of a propylamine group from the amino donor S-adenosylmethioninamine (decarboxy-AdoMet) to putrescine (1,4-diaminobutane) to yield spermidine. This is Polyamine aminopropyltransferase from Thermoanaerobacter pseudethanolicus (strain ATCC 33223 / 39E) (Clostridium thermohydrosulfuricum).